Reading from the N-terminus, the 921-residue chain is Protein translocase subunit SecA (921 aa).

ATP is bound by residues Q87, 105–109 (GEGKT), and D515. The segment at 575 to 594 (RRIDNQLRGRSGRQGDPGSS) is disordered. Positions 905, 907, 916, and 917 each coordinate Zn(2+).

This sequence belongs to the SecA family. Monomer and homodimer. Part of the essential Sec protein translocation apparatus which comprises SecA, SecYEG and auxiliary proteins SecDF-YajC and YidC. Zn(2+) is required as a cofactor.

The protein localises to the cell inner membrane. The protein resides in the cytoplasm. The enzyme catalyses ATP + H2O + cellular proteinSide 1 = ADP + phosphate + cellular proteinSide 2.. In terms of biological role, part of the Sec protein translocase complex. Interacts with the SecYEG preprotein conducting channel. Has a central role in coupling the hydrolysis of ATP to the transfer of proteins into and across the cell membrane, serving both as a receptor for the preprotein-SecB complex and as an ATP-driven molecular motor driving the stepwise translocation of polypeptide chains across the membrane. In Polynucleobacter necessarius subsp. necessarius (strain STIR1), this protein is Protein translocase subunit SecA.